The sequence spans 399 residues: Phosphoglycerate kinase (399 aa).

Substrate contacts are provided by residues 21–23 (DFN), Arg36, 59–62 (HLGR), Arg120, and Arg158. ATP is bound by residues Lys209, Gly297, Glu328, and 355–358 (GGDS).

This sequence belongs to the phosphoglycerate kinase family. Monomer.

It localises to the cytoplasm. It catalyses the reaction (2R)-3-phosphoglycerate + ATP = (2R)-3-phospho-glyceroyl phosphate + ADP. It functions in the pathway carbohydrate degradation; glycolysis; pyruvate from D-glyceraldehyde 3-phosphate: step 2/5. The sequence is that of Phosphoglycerate kinase from Streptococcus thermophilus (strain ATCC BAA-491 / LMD-9).